We begin with the raw amino-acid sequence, 46 residues long: Defensin Tk-AMP-D6 (46 aa).

Cystine bridges form between Cys3–Cys46, Cys14–Cys34, Cys20–Cys40, and Cys24–Cys42.

Its function is as follows. Plant defense peptide. This Triticum kiharae (Wheat) protein is Defensin Tk-AMP-D6.